Here is a 255-residue protein sequence, read N- to C-terminus: 5'-nucleotidase SurE (255 aa).

Asp8, Asp9, Ser40, and Asn93 together coordinate a divalent metal cation.

It belongs to the SurE nucleotidase family. A divalent metal cation is required as a cofactor.

It is found in the cytoplasm. The catalysed reaction is a ribonucleoside 5'-phosphate + H2O = a ribonucleoside + phosphate. Functionally, nucleotidase that shows phosphatase activity on nucleoside 5'-monophosphates. The chain is 5'-nucleotidase SurE from Nitrobacter hamburgensis (strain DSM 10229 / NCIMB 13809 / X14).